The primary structure comprises 396 residues: Elongation factor Tu 2 (396 aa).

The region spanning 10–206 (KPHVNVGTIG…ALDSYIPLPE (197 aa)) is the tr-type G domain. The segment at 19-26 (GHVDHGKT) is G1. A GTP-binding site is contributed by 19-26 (GHVDHGKT). Mg(2+) is bound at residue threonine 26. Residues 60–64 (GITIN) are G2. Positions 81–84 (DCPG) are G3. Residues 81–85 (DCPGH) and 136–139 (NKCD) each bind GTP. The tract at residues 136–139 (NKCD) is G4. The segment at 174–176 (SAK) is G5.

Belongs to the TRAFAC class translation factor GTPase superfamily. Classic translation factor GTPase family. EF-Tu/EF-1A subfamily. As to quaternary structure, monomer.

It localises to the cytoplasm. The catalysed reaction is GTP + H2O = GDP + phosphate + H(+). Functionally, GTP hydrolase that promotes the GTP-dependent binding of aminoacyl-tRNA to the A-site of ribosomes during protein biosynthesis. This chain is Elongation factor Tu 2, found in Albidiferax ferrireducens (strain ATCC BAA-621 / DSM 15236 / T118) (Rhodoferax ferrireducens).